A 479-amino-acid chain; its full sequence is Glycine betaine methyltransferase (479 aa).

Belongs to the trimethylamine methyltransferase family.

It catalyses the reaction Co(I)-[glycine betaine-specific corrinoid protein] + glycine betaine + H(+) = methyl-Co(III)-[glycine betaine-specific corrinoid protein] + N,N-dimethylglycine. Methyltransferase able to methylate free cob(I)alamin in vitro, using glycine betaine as the methyl donor, yealding methylcobalamin (methylCbl) and dimethylglycine. In vivo, probably carries out the methylation of a corrinoid protein, likely the adjacently encoded DSY3155, with glycine betaine, to then supply methyl groups to tetrahydrofolate (THF) for ultimate conversion to carbon dioxide; oxidation of the methyl group would also provide reducing equivalents for anaerobic respiration. Thus, may function in the pathway that allows anaerobic methylotrophic growth of D.hafniense using glycine betaine. Cannot use quaternary amines such as carnitine and choline as substrates, nor tertiary amines such as dimethylglycine or trimethylamine. The polypeptide is Glycine betaine methyltransferase (Desulfitobacterium hafniense (strain Y51)).